The primary structure comprises 683 residues: Capsid polyprotein VP90 (683 aa).

Low complexity predominate over residues methionine 1–proline 13. Disordered stretches follow at residues methionine 1 to leucine 45 and proline 391 to alanine 413. Residues lysine 14–lysine 39 show a composition bias toward basic residues. The span at leucine 398 to alanine 413 shows a compositional bias: pro residues.

It belongs to the astroviridae capsid polyprotein family. Specific enzymatic cleavages by the host yield mature proteins.

It localises to the virion. Its function is as follows. Self-assembles to form an icosahedral T=3 immature capsid. This chain is Capsid polyprotein VP90, found in Gallus gallus (Chicken).